The chain runs to 100 residues: NADH-quinone oxidoreductase subunit K (100 aa).

3 helical membrane-spanning segments follow: residues 4-24 (LSWY…GFVI), 29-49 (IVML…FASF), and 60-80 (IFVL…LAIV).

The protein belongs to the complex I subunit 4L family. In terms of assembly, NDH-1 is composed of 14 different subunits. Subunits NuoA, H, J, K, L, M, N constitute the membrane sector of the complex.

The protein resides in the cell inner membrane. It carries out the reaction a quinone + NADH + 5 H(+)(in) = a quinol + NAD(+) + 4 H(+)(out). In terms of biological role, NDH-1 shuttles electrons from NADH, via FMN and iron-sulfur (Fe-S) centers, to quinones in the respiratory chain. The immediate electron acceptor for the enzyme in this species is believed to be ubiquinone. Couples the redox reaction to proton translocation (for every two electrons transferred, four hydrogen ions are translocated across the cytoplasmic membrane), and thus conserves the redox energy in a proton gradient. The protein is NADH-quinone oxidoreductase subunit K of Thermodesulfovibrio yellowstonii (strain ATCC 51303 / DSM 11347 / YP87).